Consider the following 459-residue polypeptide: FBD-associated F-box protein At1g61320 (459 aa).

Positions 1–25 (MAPPTKRTRVEMAESSNKRMKPSET) are disordered. The 49-residue stretch at 21 to 69 (KPSETVPEDVLELMMSTYLPVQSLLTTRVLSKRFRETEVRSLDLDFSGI) folds into the F-box domain. The FBD domain occupies 396–428 (VKIIGYKGHWHELDIVEFFVKNAPSLKRLELQM).

The protein is FBD-associated F-box protein At1g61320 of Arabidopsis thaliana (Mouse-ear cress).